Reading from the N-terminus, the 176-residue chain is Translation initiation factor IF-3 (176 aa).

The protein belongs to the IF-3 family. In terms of assembly, monomer.

Its subcellular location is the cytoplasm. In terms of biological role, IF-3 binds to the 30S ribosomal subunit and shifts the equilibrium between 70S ribosomes and their 50S and 30S subunits in favor of the free subunits, thus enhancing the availability of 30S subunits on which protein synthesis initiation begins. This chain is Translation initiation factor IF-3, found in Streptococcus equi subsp. zooepidemicus (strain H70).